The primary structure comprises 509 residues: Nucleolar GTP-binding protein 2 (509 aa).

Positions Met-1–Gly-14 are enriched in basic and acidic residues. The segment at Met-1 to Gly-22 is disordered. The 162-residue stretch at Trp-204–Pro-365 folds into the CP-type G domain. Residues Gly-314 to Ser-321 and Asp-358 to Ile-362 each bind GTP. The segment at Glu-480–Asp-509 is disordered.

This sequence belongs to the TRAFAC class YlqF/YawG GTPase family. NOG2 subfamily.

It is found in the nucleus. Its subcellular location is the nucleolus. GTPase that associates with pre-60S ribosomal subunits in the nucleolus and is required for their nuclear export and maturation. The chain is Nucleolar GTP-binding protein 2 (NOG2) from Yarrowia lipolytica (strain CLIB 122 / E 150) (Yeast).